The sequence spans 397 residues: Phosphoglycerate kinase (397 aa).

Residues 25–27 (DLN), Arg-41, 64–67 (HLGR), Arg-118, and Arg-151 contribute to the substrate site. ATP contacts are provided by residues Lys-202, Glu-324, and 350–353 (GGDT).

Belongs to the phosphoglycerate kinase family. As to quaternary structure, monomer.

The protein localises to the cytoplasm. It catalyses the reaction (2R)-3-phosphoglycerate + ATP = (2R)-3-phospho-glyceroyl phosphate + ADP. It functions in the pathway carbohydrate degradation; glycolysis; pyruvate from D-glyceraldehyde 3-phosphate: step 2/5. This Acidovorax ebreus (strain TPSY) (Diaphorobacter sp. (strain TPSY)) protein is Phosphoglycerate kinase.